Reading from the N-terminus, the 180-residue chain is Large ribosomal subunit protein uL18m (180 aa).

Belongs to the universal ribosomal protein uL18 family. Component of the mitochondrial large ribosomal subunit (mt-LSU). Mature mammalian 55S mitochondrial ribosomes consist of a small (28S) and a large (39S) subunit. The 28S small subunit contains a 12S ribosomal RNA (12S mt-rRNA) and 30 different proteins. The 39S large subunit contains a 16S rRNA (16S mt-rRNA), a copy of mitochondrial valine transfer RNA (mt-tRNA(Val)), which plays an integral structural role, and 52 different proteins.

It localises to the mitochondrion. In terms of biological role, together with thiosulfate sulfurtransferase (TST), acts as a mitochondrial import factor for the cytosolic 5S rRNA. The precursor form shows RNA chaperone activity; is able to fold the 5S rRNA into an import-competent conformation that is recognized by rhodanese (TST). Both the cytoplasmic and mitochondrial forms are able to bind to the helix IV-loop D in the gamma domain of the 5S rRNA. This chain is Large ribosomal subunit protein uL18m (MRPL18), found in Homo sapiens (Human).